An 867-amino-acid polypeptide reads, in one-letter code: Cation/H(+) antiporter 23, chloroplastic (867 aa).

12 consecutive transmembrane segments (helical) span residues 43 to 63 (SGST…VANL), 75 to 95 (LYLP…PSVL), 112 to 132 (MVLE…LGLG), 146 to 166 (VIIA…LYYL), 175 to 195 (IISG…PDLA), 212 to 232 (AMCA…FGFA), 242 to 262 (KMMP…IFVI), 283 to 303 (HVWF…ACGV), 336 to 356 (GILM…GFML), 362 to 382 (FMMV…TVIT), 393 to 413 (AFAI…VLNA), and 427 to 447 (HMTI…AFAY). The segment at 848 to 867 (SMYEDEDEDDEEDHQYGIHR) is disordered. Acidic residues predominate over residues 851-860 (EDEDEDDEED).

This sequence belongs to the monovalent cation:proton antiporter 2 (CPA2) transporter (TC 2.A.37) family. CHX (TC 2.A.37.4) subfamily. Specifically expressed in flower buds and pollen. Expressed in leaves, roots and stems.

It is found in the plastid. The protein localises to the chloroplast membrane. The protein resides in the endoplasmic reticulum membrane. Operates as a K(+)/H(+) antiporter or Na(+)/H(+) antiporter of the chloroplast envelope that functions in pH homeostasis and chloroplast development. Monovalent cation transporter with a preference for Cs(+), K(+) and Rb(+) relative to Na(+) or Li(+). Required for pollen tube guidance, but not for normal pollen development. May also be involved in the development or function of the female gametophyte. In Arabidopsis thaliana (Mouse-ear cress), this protein is Cation/H(+) antiporter 23, chloroplastic (CHX23).